Consider the following 153-residue polypeptide: Ribonuclease P protein component (153 aa).

It belongs to the RnpA family. As to quaternary structure, consists of a catalytic RNA component (M1 or rnpB) and a protein subunit.

The enzyme catalyses Endonucleolytic cleavage of RNA, removing 5'-extranucleotides from tRNA precursor.. Functionally, RNaseP catalyzes the removal of the 5'-leader sequence from pre-tRNA to produce the mature 5'-terminus. It can also cleave other RNA substrates such as 4.5S RNA. The protein component plays an auxiliary but essential role in vivo by binding to the 5'-leader sequence and broadening the substrate specificity of the ribozyme. The polypeptide is Ribonuclease P protein component (Helicobacter acinonychis (strain Sheeba)).